The chain runs to 92 residues: Small ribosomal subunit protein uS19 (92 aa).

The protein belongs to the universal ribosomal protein uS19 family.

In terms of biological role, protein S19 forms a complex with S13 that binds strongly to the 16S ribosomal RNA. The sequence is that of Small ribosomal subunit protein uS19 from Caulobacter sp. (strain K31).